Here is a 64-residue protein sequence, read N- to C-terminus: Large ribosomal subunit protein bL35 (64 aa).

Residues 1-28 are compositionally biased toward basic residues; the sequence is MPKMKTKSGAAKRFKKTAGGLKHKHAFK. A disordered region spans residues 1–64; the sequence is MPKMKTKSGA…ARVERSLRLR (64 aa). Over residues 53–64 the composition is skewed to basic and acidic residues; the sequence is DVARVERSLRLR.

It belongs to the bacterial ribosomal protein bL35 family.

This is Large ribosomal subunit protein bL35 from Pseudomonas aeruginosa (strain LESB58).